The chain runs to 615 residues: Delta(14)-sterol reductase LBR (615 aa).

In terms of domain architecture, Tudor spans 1 to 62; it reads MPSRKFADGE…DIKPLTSFRQ (62 aa). The Nuclear segment spans residues 1 to 211; sequence MPSRKFADGE…IRAKDLEFGG (211 aa). The segment at 53-109 is disordered; it reads DIKPLTSFRQRKGGSTSSSPSRRRGSRSRSRSRSPGRPPKSARRSASASHQADIKEA. At Lys-55 the chain carries N6-acetyllysine. Thr-58 carries the phosphothreonine modification. Residues Ser-59 and Ser-67 each carry the phosphoserine modification. Phosphoserine; by CDK1 is present on residues Ser-71 and Ser-86. Over residues 73–86 the composition is skewed to basic residues; the sequence is SRRRGSRSRSRSRS. Phosphoserine occurs at positions 97 and 99. Thr-118 is subject to Phosphothreonine. Ser-128 is subject to Phosphoserine. Thr-200 is subject to Phosphothreonine. 8 helical membrane passes run 212–232, 258–278, 299–319, 326–346, 415–435, 447–467, 481–501, and 561–581; these read VPGV…LLLM, VFGV…LPIG, FYAF…GVEF, FLQF…YLYM, VPSL…VDAL, IIHD…VPFI, EVSW…YVIF, and ACGF…MLLV. N6-acetyllysine is present on residues Lys-594 and Lys-601.

Belongs to the ERG4/ERG24 family. In terms of assembly, interacts with CBX5. Interacts with DNA. Interaction with DNA is sequence independent with higher affinity for supercoiled and relaxed circular DNA than linear DNA. Interacts with lamin B. Interacts with CLNK. Interacts with TMEM147; promoting LBR localization to the nucleus inner membrane. Phosphorylated by CDK1 in mitosis when the inner nuclear membrane breaks down into vesicles that dissociate from the lamina and the chromatin. It is phosphorylated by different protein kinases in interphase when the membrane is associated with these structures. Phosphorylation of LBR and HP1 proteins may be responsible for some of the alterations in chromatin organization and nuclear structure which occur at various times during the cell cycle. Phosphorylated by SRPK1. In late anaphase LBR is dephosphorylated, probably by PP1 and/or PP2A, allowing reassociation with chromatin.

Its subcellular location is the nucleus inner membrane. It is found in the nucleus. It localises to the cytoplasm. The protein resides in the endoplasmic reticulum membrane. The catalysed reaction is 5alpha-cholest-8,14-dien-3beta-ol + NADPH + H(+) = 5alpha-cholest-8-en-3beta-ol + NADP(+). It catalyses the reaction 4,4-dimethyl-5alpha-cholesta-8,24-dien-3beta-ol + NADP(+) = 4,4-dimethyl-5alpha-cholesta-8,14,24-trien-3beta-ol + NADPH + H(+). The enzyme catalyses 4,4-dimethyl-8,14-cholestadien-3beta-ol + NADPH + H(+) = 4,4-dimethyl-5alpha-cholest-8-en-3beta-ol + NADP(+). It participates in steroid biosynthesis; cholesterol biosynthesis. In terms of biological role, catalyzes the reduction of the C14-unsaturated bond of lanosterol, as part of the metabolic pathway leading to cholesterol biosynthesis. Plays a critical role in myeloid cell cholesterol biosynthesis which is essential to both myeloid cell growth and functional maturation. Mediates the activation of NADPH oxidases, perhaps by maintaining critical levels of cholesterol required for membrane lipid raft formation during neutrophil differentiation. Anchors the lamina and the heterochromatin to the inner nuclear membrane. This chain is Delta(14)-sterol reductase LBR (LBR), found in Pongo abelii (Sumatran orangutan).